The chain runs to 130 residues: Small ribosomal subunit protein uS8 (130 aa).

It belongs to the universal ribosomal protein uS8 family. In terms of assembly, part of the 30S ribosomal subunit. Contacts proteins S5 and S12.

Its function is as follows. One of the primary rRNA binding proteins, it binds directly to 16S rRNA central domain where it helps coordinate assembly of the platform of the 30S subunit. In Aliivibrio fischeri (strain MJ11) (Vibrio fischeri), this protein is Small ribosomal subunit protein uS8.